A 320-amino-acid polypeptide reads, in one-letter code: Methylenetetrahydrofolate dehydrogenase [NAD(+)] (320 aa).

The active site involves Cys152. Residues 187–188 (RS) and 210–211 (DI) contribute to the NAD(+) site.

The protein belongs to the tetrahydrofolate dehydrogenase/cyclohydrolase family. As to quaternary structure, homodimer.

Its subcellular location is the cytoplasm. It localises to the nucleus. It carries out the reaction (6R)-5,10-methylene-5,6,7,8-tetrahydrofolate + NAD(+) = (6R)-5,10-methenyltetrahydrofolate + NADH. Its pathway is one-carbon metabolism; tetrahydrofolate interconversion. Catalyzes oxidation of cytoplasmic one-carbon units for purine biosynthesis. The sequence is that of Methylenetetrahydrofolate dehydrogenase [NAD(+)] (mtd1) from Schizosaccharomyces pombe (strain 972 / ATCC 24843) (Fission yeast).